The following is a 396-amino-acid chain: S-adenosylmethionine synthase (396 aa).

His16 lines the ATP pocket. Asp18 contacts Mg(2+). Position 44 (Glu44) interacts with K(+). Residues Glu57 and Gln100 each contribute to the L-methionine site. A flexible loop region spans residues 100 to 110 (QSVDIAQGVDR). Residues 165-167 (DAK), Asp240, 246-247 (RK), Ala263, and Lys267 each bind ATP. L-methionine is bound at residue Asp240. Lys271 is a binding site for L-methionine.

This sequence belongs to the AdoMet synthase family. Homotetramer; dimer of dimers. Mg(2+) is required as a cofactor. The cofactor is K(+).

Its subcellular location is the cytoplasm. The enzyme catalyses L-methionine + ATP + H2O = S-adenosyl-L-methionine + phosphate + diphosphate. The protein operates within amino-acid biosynthesis; S-adenosyl-L-methionine biosynthesis; S-adenosyl-L-methionine from L-methionine: step 1/1. Functionally, catalyzes the formation of S-adenosylmethionine (AdoMet) from methionine and ATP. The overall synthetic reaction is composed of two sequential steps, AdoMet formation and the subsequent tripolyphosphate hydrolysis which occurs prior to release of AdoMet from the enzyme. The protein is S-adenosylmethionine synthase of Pseudomonas putida (strain ATCC 700007 / DSM 6899 / JCM 31910 / BCRC 17059 / LMG 24140 / F1).